Reading from the N-terminus, the 211-residue chain is Ribonuclease P protein component 3 (211 aa).

It belongs to the eukaryotic/archaeal RNase P protein component 3 family. In terms of assembly, consists of a catalytic RNA component and at least 4-5 protein subunits.

Its subcellular location is the cytoplasm. The enzyme catalyses Endonucleolytic cleavage of RNA, removing 5'-extranucleotides from tRNA precursor.. Functionally, part of ribonuclease P, a protein complex that generates mature tRNA molecules by cleaving their 5'-ends. The sequence is that of Ribonuclease P protein component 3 from Aeropyrum pernix (strain ATCC 700893 / DSM 11879 / JCM 9820 / NBRC 100138 / K1).